The chain runs to 284 residues: Bifunctional protein FolD (284 aa).

Residues glycine 165–serine 167, serine 190, and isoleucine 231 each bind NADP(+).

Belongs to the tetrahydrofolate dehydrogenase/cyclohydrolase family. As to quaternary structure, homodimer.

It carries out the reaction (6R)-5,10-methylene-5,6,7,8-tetrahydrofolate + NADP(+) = (6R)-5,10-methenyltetrahydrofolate + NADPH. The enzyme catalyses (6R)-5,10-methenyltetrahydrofolate + H2O = (6R)-10-formyltetrahydrofolate + H(+). Its pathway is one-carbon metabolism; tetrahydrofolate interconversion. Functionally, catalyzes the oxidation of 5,10-methylenetetrahydrofolate to 5,10-methenyltetrahydrofolate and then the hydrolysis of 5,10-methenyltetrahydrofolate to 10-formyltetrahydrofolate. This Streptococcus thermophilus (strain ATCC BAA-491 / LMD-9) protein is Bifunctional protein FolD.